Here is a 149-residue protein sequence, read N- to C-terminus: Ribonuclease H (149 aa).

In terms of domain architecture, RNase H type-1 spans glutamine 4–aspartate 145. Mg(2+) contacts are provided by aspartate 13, glutamate 51, aspartate 73, and aspartate 137.

Belongs to the RNase H family. Monomer. Requires Mg(2+) as cofactor.

It localises to the cytoplasm. The enzyme catalyses Endonucleolytic cleavage to 5'-phosphomonoester.. In terms of biological role, endonuclease that specifically degrades the RNA of RNA-DNA hybrids. This chain is Ribonuclease H, found in Halorhodospira halophila (strain DSM 244 / SL1) (Ectothiorhodospira halophila (strain DSM 244 / SL1)).